Here is a 1204-residue protein sequence, read N- to C-terminus: E3 ubiquitin-protein ligase DZIP3 (1204 aa).

2 disordered regions span residues M1–E22 and S640–S681. Residues S649 to S658 show a composition bias toward basic and acidic residues. Over residues K659 to S668 the composition is skewed to basic residues. 2 coiled-coil regions span residues K746 to A861 and Q906 to Q941. Residues P1088–A1098 show a composition bias toward basic and acidic residues. The tract at residues P1088 to E1141 is disordered. Polar residues predominate over residues Q1099 to A1126. The span at K1132–E1141 shows a compositional bias: acidic residues. The RING-type; atypical zinc-finger motif lies at C1144–R1184.

Probably interacts with DAZL.

The protein resides in the cytoplasm. The catalysed reaction is S-ubiquitinyl-[E2 ubiquitin-conjugating enzyme]-L-cysteine + [acceptor protein]-L-lysine = [E2 ubiquitin-conjugating enzyme]-L-cysteine + N(6)-ubiquitinyl-[acceptor protein]-L-lysine.. The protein operates within protein modification; protein ubiquitination. Its function is as follows. E3 Ubiquitin ligase proteins mediate ubiquitination and subsequent proteasomal degradation of target proteins. E3 ubiquitin ligases accept ubiquitin from an E2 ubiquitin-conjugating enzyme in the form of a thioester and then directly transfers the ubiquitin to targeted substrates. Able to specifically bind RNA. The sequence is that of E3 ubiquitin-protein ligase DZIP3 (Dzip3) from Mus musculus (Mouse).